A 949-amino-acid polypeptide reads, in one-letter code: Coiled-coil domain-containing protein 66 (949 aa).

A phosphothreonine mark is found at threonine 115 and threonine 121. Serine 369 is modified (phosphoserine). The stretch at 474-558 (QVEEKCRKKQ…EQRIRELAQK (85 aa)) forms a coiled coil. The mediates localization to cilia, centrosomes and spindle microtubules and the interaction with PCM1, CEP290, CEP104 and CSPP1 stretch occupies residues 570 to 949 (GVDTIQIEYN…NQEENFGSSF (380 aa)). Serine 606 carries the phosphoserine modification. 2 disordered regions span residues 691–714 (QTKH…KRYI) and 789–809 (SFSK…RTQQ).

As to quaternary structure, homodimer; disulfide-linked. Interacts with CEP290. Interacts with PCM1. Interacts with ARMC9, TOGARAM1, CSPP1 and CEP104. Interacts with CDK5RAP2, CEP152, CEP192, TBG1 and PRC1.

Its subcellular location is the cytoplasm. The protein localises to the cytoskeleton. It is found in the microtubule organizing center. The protein resides in the centrosome. It localises to the centriolar satellite. Its subcellular location is the cell projection. The protein localises to the cilium. It is found in the cilium basal body. The protein resides in the cilium axoneme. It localises to the photoreceptor inner segment. Its subcellular location is the photoreceptor outer segment. In terms of biological role, microtubule-binding protein required for ciliogenesis. May function in ciliogenesis by mediating the transport of proteins like BBS4 to the cilium, but also through the organization of the centriolar satellites. Required for the assembly of signaling-competent cilia with proper structure and length. Mediates this function in part by regulating transition zone assembly and basal body recruitment of the IFT-B complex. Cooperates with the ciliopathy proteins CSPP1 and CEP104 during cilium length regulation. Plays two important roles during cell division. First, is required for mitotic progression via regulation of spindle assembly, organization and orientation, levels of spindle microtubules (MTs), kinetochore-fiber integrity, and chromosome alignment. Second, functions during cytokinesis in part by regulating assembly and organization of central spindle and midbody MTs Plays a role in retina morphogenesis and/or homeostasis. The protein is Coiled-coil domain-containing protein 66 of Pongo abelii (Sumatran orangutan).